The sequence spans 454 residues: Exodeoxyribonuclease 7 large subunit (454 aa).

A compositionally biased stretch (low complexity) spans 337–352 (ANQRQQRASQRLRQQN). Residues 337–359 (ANQRQQRASQRLRQQNPQPRIHR) are disordered.

The protein belongs to the XseA family. In terms of assembly, heterooligomer composed of large and small subunits.

Its subcellular location is the cytoplasm. The enzyme catalyses Exonucleolytic cleavage in either 5'- to 3'- or 3'- to 5'-direction to yield nucleoside 5'-phosphates.. Functionally, bidirectionally degrades single-stranded DNA into large acid-insoluble oligonucleotides, which are then degraded further into small acid-soluble oligonucleotides. The chain is Exodeoxyribonuclease 7 large subunit from Salmonella arizonae (strain ATCC BAA-731 / CDC346-86 / RSK2980).